A 163-amino-acid polypeptide reads, in one-letter code: Protein-export protein SecB (163 aa).

Belongs to the SecB family. In terms of assembly, homotetramer, a dimer of dimers. One homotetramer interacts with 1 SecA dimer.

It localises to the cytoplasm. Its function is as follows. One of the proteins required for the normal export of preproteins out of the cell cytoplasm. It is a molecular chaperone that binds to a subset of precursor proteins, maintaining them in a translocation-competent state. It also specifically binds to its receptor SecA. This is Protein-export protein SecB from Methylibium petroleiphilum (strain ATCC BAA-1232 / LMG 22953 / PM1).